A 142-amino-acid polypeptide reads, in one-letter code: Multiprotein-bridging factor 1b (142 aa).

The segment at 49–75 (NAGSNKAASSGTSLNTKKLDDDTENLS) is disordered. The span at 50–64 (AGSNKAASSGTSLNT) shows a compositional bias: polar residues. Over residues 65–75 (KKLDDDTENLS) the composition is skewed to basic and acidic residues. The 55-residue stretch at 87–141 (IMQARGEKKLTQSQLAHLINEKPQVIQEYESGKAIPNQQILSKLERALGAKLRGK) folds into the HTH cro/C1-type domain. Residues 98 to 117 (QSQLAHLINEKPQVIQEYES) constitute a DNA-binding region (H-T-H motif).

The protein belongs to the MBF1 family. In terms of tissue distribution, expressed in leaves, roots, stems, petioles and shoots. Higher expression in flowers and siliques. Detected in leaf veins through development.

It is found in the nucleus. Its subcellular location is the nucleolus. Transcriptional coactivator that stimulates transcriptional activity by bridging regulatory proteins and TBP, thereby recruiting TBP to promoters occupied by DNA-binding regulators. In Arabidopsis thaliana (Mouse-ear cress), this protein is Multiprotein-bridging factor 1b (MBF1B).